We begin with the raw amino-acid sequence, 90 residues long: MADQLLRKKRRIFIHSVGAGTINALLDCLLEDEVISQEDMNKVRDENDTVMDKARVLIDLVTGKGPKSCCKFIKHLCEEDPQLASKMGLH.

Residues 1 to 90 (MADQLLRKKR…PQLASKMGLH (90 aa)) enclose the CARD domain.

In terms of assembly, interacts with pro-CASP1. Interacts with CARD8. Primarily expressed in the heart and placenta.

In terms of biological role, inhibits generation of IL-1-beta by interacting with caspase-1 and preventing its association with RIP2. Down-regulates the release of IL1B. This Homo sapiens (Human) protein is Caspase recruitment domain-containing protein 18 (CARD18).